The sequence spans 572 residues: Urease subunit alpha (572 aa).

The region spanning glycine 133–phenylalanine 572 is the Urease domain. Residues histidine 138, histidine 140, and lysine 221 each coordinate Ni(2+). The residue at position 221 (lysine 221) is an N6-carboxylysine. A substrate-binding site is contributed by histidine 223. 2 residues coordinate Ni(2+): histidine 250 and histidine 276. Histidine 324 (proton donor) is an active-site residue. Aspartate 364 serves as a coordination point for Ni(2+).

It belongs to the metallo-dependent hydrolases superfamily. Urease alpha subunit family. In terms of assembly, heterotrimer of UreA (gamma), UreB (beta) and UreC (alpha) subunits. Three heterotrimers associate to form the active enzyme. Requires Ni cation as cofactor. Post-translationally, carboxylation allows a single lysine to coordinate two nickel ions.

The protein resides in the cytoplasm. The enzyme catalyses urea + 2 H2O + H(+) = hydrogencarbonate + 2 NH4(+). It participates in nitrogen metabolism; urea degradation; CO(2) and NH(3) from urea (urease route): step 1/1. Its function is as follows. Ureolysis may allow urea to be employed as a nitrogen source for growth and produces ammonia which may protect from killing at low pH. The chain is Urease subunit alpha from Streptococcus salivarius (strain 57.I).